A 230-amino-acid polypeptide reads, in one-letter code: NAD(P)H-hydrate epimerase (230 aa).

A YjeF N-terminal domain is found at 11–218 (AIAVDQELFN…ALQRKYELNL (208 aa)). 61–65 (NNGGD) is a (6S)-NADPHX binding site. K(+) contacts are provided by Asn62 and Asp126. (6S)-NADPHX contacts are provided by residues 130-136 (GFSFKPP) and Asp159. Ser162 lines the K(+) pocket.

This sequence belongs to the NnrE/AIBP family. K(+) is required as a cofactor.

The catalysed reaction is (6R)-NADHX = (6S)-NADHX. The enzyme catalyses (6R)-NADPHX = (6S)-NADPHX. Catalyzes the epimerization of the S- and R-forms of NAD(P)HX, a damaged form of NAD(P)H that is a result of enzymatic or heat-dependent hydration. This is a prerequisite for the S-specific NAD(P)H-hydrate dehydratase to allow the repair of both epimers of NAD(P)HX. This is NAD(P)H-hydrate epimerase from Drosophila sechellia (Fruit fly).